We begin with the raw amino-acid sequence, 366 residues long: tRNA/tmRNA (uracil-C(5))-methyltransferase (366 aa).

Residues Q190, Y218, N223, E239, and D299 each coordinate S-adenosyl-L-methionine. Catalysis depends on C324, which acts as the Nucleophile. E358 serves as the catalytic Proton acceptor.

The protein belongs to the class I-like SAM-binding methyltransferase superfamily. RNA M5U methyltransferase family. TrmA subfamily.

The catalysed reaction is uridine(54) in tRNA + S-adenosyl-L-methionine = 5-methyluridine(54) in tRNA + S-adenosyl-L-homocysteine + H(+). The enzyme catalyses uridine(341) in tmRNA + S-adenosyl-L-methionine = 5-methyluridine(341) in tmRNA + S-adenosyl-L-homocysteine + H(+). Functionally, dual-specificity methyltransferase that catalyzes the formation of 5-methyluridine at position 54 (m5U54) in all tRNAs, and that of position 341 (m5U341) in tmRNA (transfer-mRNA). The sequence is that of tRNA/tmRNA (uracil-C(5))-methyltransferase from Escherichia coli O6:H1 (strain CFT073 / ATCC 700928 / UPEC).